Here is a 374-residue protein sequence, read N- to C-terminus: Chaperone protein DnaJ (374 aa).

The region spanning 4–68 is the J domain; sequence DYYDILGVSR…ETRARYDRFG (65 aa). The CR-type zinc finger occupies 133 to 215; it reads GGEKQIRITH…CGGNGQAQVT (83 aa). Zn(2+) is bound by residues cysteine 146, cysteine 149, cysteine 163, cysteine 166, cysteine 189, cysteine 192, cysteine 203, and cysteine 206. CXXCXGXG motif repeat units lie at residues 146–153, 163–170, 189–196, and 203–210; these read CTTCNGSG, CGTCGGAG, CPTCNGKG, and CETCGGNG.

The protein belongs to the DnaJ family. Homodimer. Zn(2+) serves as cofactor.

The protein localises to the cytoplasm. Participates actively in the response to hyperosmotic and heat shock by preventing the aggregation of stress-denatured proteins and by disaggregating proteins, also in an autonomous, DnaK-independent fashion. Unfolded proteins bind initially to DnaJ; upon interaction with the DnaJ-bound protein, DnaK hydrolyzes its bound ATP, resulting in the formation of a stable complex. GrpE releases ADP from DnaK; ATP binding to DnaK triggers the release of the substrate protein, thus completing the reaction cycle. Several rounds of ATP-dependent interactions between DnaJ, DnaK and GrpE are required for fully efficient folding. Also involved, together with DnaK and GrpE, in the DNA replication of plasmids through activation of initiation proteins. The sequence is that of Chaperone protein DnaJ from Cyanothece sp. (strain PCC 7425 / ATCC 29141).